The sequence spans 175 residues: Lipopolysaccharide export system protein LptH (175 aa).

Positions 1 to 24 (MRFVNTLPLIFGLTAALGSSMALA) are cleaved as a signal peptide.

This sequence belongs to the LptA family. Component of the lipopolysaccharide transport and assembly complex. Mainly exists as a dimer in solution. Tends to oligomerize already in solution. The protomers follow one another in a head-to-tail fashion throughout the crystal lattice, yielding a continuous fiber arrangement.

The protein localises to the periplasm. In terms of biological role, involved in the assembly of lipopolysaccharide (LPS). Required for the translocation of LPS from the inner membrane to the outer membrane. May form a bridge between the inner membrane and the outer membrane, via interactions with LptC and LptD, thereby facilitating LPS transfer across the periplasm. Binds LPS. Important for cell envelope stability and essential for growth, cell viability and ability to cause infection in different animal models. The polypeptide is Lipopolysaccharide export system protein LptH (Pseudomonas aeruginosa (strain ATCC 15692 / DSM 22644 / CIP 104116 / JCM 14847 / LMG 12228 / 1C / PRS 101 / PAO1)).